The primary structure comprises 80 residues: Exodeoxyribonuclease 7 small subunit (80 aa).

Belongs to the XseB family. Heterooligomer composed of large and small subunits.

It localises to the cytoplasm. The enzyme catalyses Exonucleolytic cleavage in either 5'- to 3'- or 3'- to 5'-direction to yield nucleoside 5'-phosphates.. Functionally, bidirectionally degrades single-stranded DNA into large acid-insoluble oligonucleotides, which are then degraded further into small acid-soluble oligonucleotides. This Escherichia coli O139:H28 (strain E24377A / ETEC) protein is Exodeoxyribonuclease 7 small subunit.